We begin with the raw amino-acid sequence, 96 residues long: CRISPR-associated endoribonuclease Cas2 1 (96 aa).

Position 8 (D8) interacts with Mg(2+).

The protein belongs to the CRISPR-associated endoribonuclease Cas2 protein family. As to quaternary structure, homodimer, forms a heterotetramer with a Cas1 homodimer. The cofactor is Mg(2+).

CRISPR (clustered regularly interspaced short palindromic repeat), is an adaptive immune system that provides protection against mobile genetic elements (viruses, transposable elements and conjugative plasmids). CRISPR clusters contain sequences complementary to antecedent mobile elements and target invading nucleic acids. CRISPR clusters are transcribed and processed into CRISPR RNA (crRNA). Functions as a ssRNA-specific endoribonuclease. Involved in the integration of spacer DNA into the CRISPR cassette. In Moorella thermoacetica (strain ATCC 39073 / JCM 9320), this protein is CRISPR-associated endoribonuclease Cas2 1.